We begin with the raw amino-acid sequence, 371 residues long: Ferredoxin--NADP reductase, apicoplast (371 aa).

An apicoplast-targeting transit peptide spans 1–18 (MKIRFVFILSVLISGVCC). Residues Lys-68, 155 to 159 (ARLYS), 172 to 179 (AIKIHKYE), 192 to 194 (YCS), and Thr-235 contribute to the FAD site. The FAD-binding FR-type domain maps to 68–218 (KNPLKCKIVD…TGAHGYFNLP (151 aa)). Residue Lys-174 coordinates NADP(+). Residues 272-273 (VY), Ser-302, 313-315 (YVQ), and 341-343 (HKS) each bind NADP(+). FAD is bound by residues Lys-342 and Tyr-371.

It belongs to the ferredoxin--NADP reductase type 1 family. Monomer. Homodimer; disulfide linked. NADP binding accelerates formation of an inactive, disulfide-linked homodimer when the protein is exposed to air for 24 hours or more (in vitro); the physiological relevance of this is uncertain. It depends on FAD as a cofactor.

Its subcellular location is the plastid. The protein resides in the apicoplast. The enzyme catalyses 2 reduced [2Fe-2S]-[ferredoxin] + NADP(+) + H(+) = 2 oxidized [2Fe-2S]-[ferredoxin] + NADPH. In terms of biological role, may play a role in the terminal step of the DOXP/MEP pathway for isoprenoid precursor biosynthesis. The chain is Ferredoxin--NADP reductase, apicoplast from Plasmodium falciparum (isolate 3D7).